The chain runs to 385 residues: MSGLRAASVFSPVFKRMASSIPSQFKSIIYNSHSLEDCTGVLSVHNYKPKQDLNKSVVLRTLAFPINPSDINQLQGVYPSLPEKTLDYSTEKPSAIAGNEGLFEVVSLPEHGDHGELKVGDWVIPVQANQGTWSNYRVFDKASDLIKVNGLDLYSAATVSVNGCTAYQLVNNYVDWNADGNEWLIQNAGTSGVSKFVTQIAKARGVKTLSVIRDRDNFEEVAEVLEQKFGATKVISESQNNDKDFGKKELPKVLGDKARVRLALNSVGGKSSSAIARKLERDALMLTYGGMSKQPVTIPTSLHIFKGLTSKGYWVTENNKRDPTDKVNTIKGFIDLYKQGKIISPEEEIETMEWDANNGDDQQLLELVKRGITEKGKKKMVLLKW.

Tyrosine 78 (proton donor) is an active-site residue. NADP(+) is bound by residues asparagine 162, 190–193 (TSGV), 213–215 (RDR), 288–291 (YGGM), 313–315 (YWV), and lysine 378.

This sequence belongs to the zinc-containing alcohol dehydrogenase family. Quinone oxidoreductase subfamily. In terms of assembly, homodimer.

The protein localises to the mitochondrion matrix. The catalysed reaction is a 2,3-saturated acyl-[ACP] + NADP(+) = a (2E)-enoyl-[ACP] + NADPH + H(+). Its function is as follows. Catalyzes the NADPH-dependent reduction of trans-2-enoyl thioesters in mitochondrial fatty acid synthesis (fatty acid synthesis type II). Fatty acid chain elongation in mitochondria uses acyl carrier protein (ACP) as an acyl group carrier, but the enzyme accepts both ACP and CoA thioesters as substrates in vitro. Required for respiration and the maintenance of the mitochondrial compartment. This chain is Enoyl-[acyl-carrier-protein] reductase, mitochondrial (ETR1), found in Candida glabrata (strain ATCC 2001 / BCRC 20586 / JCM 3761 / NBRC 0622 / NRRL Y-65 / CBS 138) (Yeast).